We begin with the raw amino-acid sequence, 187 residues long: Accessory gene regulator protein B (187 aa).

5 consecutive transmembrane segments (helical) span residues 49–69 (IAYILNIFIFTLITNISFYLI), 82–102 (FWCYIESITLFIVLPLLVLHF), 107–127 (TLMMFLALISVGVVIKYAPAA), 143–163 (YFSIIISTILFIITLFVKEPY), and 164–184 (TQFIQLGIIIQAITLLPIYYS).

Belongs to the AgrB family.

Its subcellular location is the cell membrane. Essential for the production of a quorum sensing system signal molecule, the autoinducing peptide (AIP). This quorum sensing system is responsible for the regulation of the expression of virulence factor genes. Involved in the proteolytic processing of AgrD, the precursor of AIP. This chain is Accessory gene regulator protein B, found in Staphylococcus aureus (strain MW2).